The primary structure comprises 361 residues: Probable cytosolic iron-sulfur protein assembly protein 1 (361 aa).

WD repeat units follow at residues 10–49 (AHSD…NFPQ), 56–105 (THKR…TEIL), 120–160 (GHEN…EEFE), 167–206 (DHQH…DDWS), 213–265 (GHEG…SIKH), 280–319 (VHQY…SWSI), and 327–361 (HGVH…IWKP).

This sequence belongs to the WD repeat CIA1 family. In terms of assembly, interacts with NAR1.

It is found in the cytoplasm. The protein resides in the nucleus. Functionally, essential component of the cytosolic iron-sulfur (Fe/S) protein assembly machinery. Required for the maturation of extramitochondrial Fe/S proteins. This Scheffersomyces stipitis (strain ATCC 58785 / CBS 6054 / NBRC 10063 / NRRL Y-11545) (Yeast) protein is Probable cytosolic iron-sulfur protein assembly protein 1.